Reading from the N-terminus, the 380-residue chain is High affinity transport system protein p37 (380 aa).

Positions 1 to 26 are cleaved as a signal peptide; it reads MLKRKKLLQGFLKFLPLIIPATIFVS. Residue C27 is the site of N-palmitoyl cysteine attachment. C27 is lipidated: S-diacylglycerol cysteine. The segment at 285 to 304 is disordered; sequence NHFYTPTENNGKGDSEKSNN.

It is found in the cell membrane. In terms of biological role, P37 is part of a high-affinity transport system. In Mycoplasma pneumoniae (strain ATCC 29342 / M129 / Subtype 1) (Mycoplasmoides pneumoniae), this protein is High affinity transport system protein p37 (p37).